We begin with the raw amino-acid sequence, 521 residues long: Ribonuclease Y (521 aa).

A helical transmembrane segment spans residues 5–25 (MMTMILAVIAAAIGFLIGNLL). One can recognise a KH domain in the interval 211–271 (TVSVVALPSD…VRREVAKLSL (61 aa)). Residues 337–430 (VYQHSLEVAF…VQAADALSGA (94 aa)) form the HD domain.

It belongs to the RNase Y family.

The protein localises to the cell membrane. Endoribonuclease that initiates mRNA decay. This is Ribonuclease Y from Geotalea uraniireducens (strain Rf4) (Geobacter uraniireducens).